We begin with the raw amino-acid sequence, 487 residues long: Glycogen synthase (487 aa).

Lysine 20 contributes to the ADP-alpha-D-glucose binding site.

Belongs to the glycosyltransferase 1 family. Bacterial/plant glycogen synthase subfamily.

It carries out the reaction [(1-&gt;4)-alpha-D-glucosyl](n) + ADP-alpha-D-glucose = [(1-&gt;4)-alpha-D-glucosyl](n+1) + ADP + H(+). Its pathway is glycan biosynthesis; glycogen biosynthesis. Functionally, synthesizes alpha-1,4-glucan chains using ADP-glucose. The sequence is that of Glycogen synthase from Aliivibrio fischeri (strain MJ11) (Vibrio fischeri).